We begin with the raw amino-acid sequence, 376 residues long: MMQKLQMYVYIYLFMLIAAGPVDLNEGSEREENVEKEGLCNACAWRQNTRYSRIEAIKIQILSKLRLETAPNISKDAIRQLLPRAPPLRELIDQYDVQRDDSSDGSLEDDDYHATTETIITMPTESDFLMQADGKPKCCFFKFSSKIQYNKVVKAQLWIYLRPVKTPTTVFVQILRLIKPMKDGTRYTGIRSLKLDMSPGTGIWQSIDVKTVLQNWLKQPESNLGIEIKALDENGHDLAVTFPGPGEDGLNPFLEVKVTDTPKRSRRDFGLDCDEHSTESRCCRYPLTVDFEAFGWDWIIAPKRYKANYCSGECEFVFLQKYPHTHLVHQANPRGSAGPCCTPTKMSPINMLYFNGKEQIIYGKIPAMVVDRCGCS.

An N-terminal signal peptide occupies residues 1–24 (MMQKLQMYVYIYLFMLIAAGPVDL). The propeptide occupies 25–267 (NEGSEREENV…VTDTPKRSRR (243 aa)). Asn-72 carries an N-linked (GlcNAc...) asparagine glycan. Intrachain disulfides connect Cys-273–Cys-283, Cys-282–Cys-341, Cys-310–Cys-373, and Cys-314–Cys-375.

It belongs to the TGF-beta family. In terms of assembly, homodimer; disulfide-linked. Interacts with WFIKKN2, leading to inhibit its activity. Interacts with FSTL3. Post-translationally, synthesized as large precursor molecule that undergoes proteolytic cleavage to generate an N-terminal propeptide and a disulfide linked C-terminal dimer, which is the biologically active molecule. The circulating form consists of a latent complex of the C-terminal dimer and other proteins, including its propeptide, which maintain the C-terminal dimer in a latent, inactive state. Ligand activation requires additional cleavage of the prodomain by a tolloid-like metalloproteinase. In terms of tissue distribution, expressed specifically in developing and adult skeletal muscle. Weak expression in adipose tissue.

The protein resides in the secreted. Functionally, acts specifically as a negative regulator of skeletal muscle growth. This chain is Growth/differentiation factor 8 (Mstn), found in Mus musculus (Mouse).